We begin with the raw amino-acid sequence, 565 residues long: MIKISKKDYVNMYGPTTNDRVRLADTDLILRVEKDYTLYGEEVKFGGGKNIRDGMAQSVSEGDFPDLVLTNALIVDYTGIYKADIGIKNGYIVGIGKAGNPDIQDGVDPSLIIGTNTDIIGAEGLIVTAGGIDTHIHFISPTQIECALYSGVTTMIGGGIGPSEGTNATTCTSGAYHIHSMLKATQNYPMNFGFLGKGNSSNKNALKEQIIAGACGLKIHEDWGATSSVIDASLNIADEMDIQVAIHTDTLNEAGFVEDTIKAINGRVIHTFHTEGAGGGHAPDIIKMAGFENVLPASTNPTMPFTKNTIDEHLDMLMVCHHLDNKIKEDVEFADSRIRPETIAAEDKLHDMGVFSIMSSDSQAMGRVGEVILRTWQSADKCKKEFGALKEDNDLDDNFRIKRYIAKYTINPAIAHGIDSYVGSIEVGKFADLVLWQPKFFGVKPKLILKGGLIVGAKIGDANASIPTPEPIIYEKMFGANLNENALHFVSKASLDANIPEKLSLKRKCVAVKNCRNITKKDLKFNDKVQDIEVNPQTYEVKINGELISSKSVDSLALARKYFMI.

The 436-residue stretch at 130 to 565 (GGIDTHIHFI…LALARKYFMI (436 aa)) folds into the Urease domain. Residues H135, H137, and K218 each coordinate Ni(2+). K218 is modified (N6-carboxylysine). H220 contacts substrate. The Ni(2+) site is built by H247 and H273. The active-site Proton donor is H321. Residue D361 coordinates Ni(2+).

The protein belongs to the metallo-dependent hydrolases superfamily. Urease alpha subunit family. In terms of assembly, heterohexamer of 3 UreA (alpha) and 3 UreB (beta) subunits. Ni cation is required as a cofactor. Post-translationally, carboxylation allows a single lysine to coordinate two nickel ions.

It is found in the cytoplasm. It catalyses the reaction urea + 2 H2O + H(+) = hydrogencarbonate + 2 NH4(+). The protein operates within nitrogen metabolism; urea degradation; CO(2) and NH(3) from urea (urease route): step 1/1. The sequence is that of Urease subunit beta from Campylobacter lari.